The chain runs to 1773 residues: Plexin-2 (1773 aa).

The N-terminal stretch at 1–19 (MLFIESAFLVLTSLSAAEA) is a signal peptide. Residues 20–436 (ATPFEGGVKQ…MPYGIVMEEL (417 aa)) enclose the Sema domain. Residues 20–1130 (ATPFEGGVKQ…SDHALPSRLS (1111 aa)) are Extracellular-facing. N-linked (GlcNAc...) asparagine glycosylation is present at Asn-65. Intrachain disulfides connect Cys-83/Cys-90, Cys-117/Cys-125, Cys-239/Cys-341, Cys-255/Cys-292, Cys-310/Cys-328, Cys-439/Cys-456, Cys-445/Cys-479, Cys-448/Cys-465, and Cys-459/Cys-471. A glycan (N-linked (GlcNAc...) asparagine) is linked at Asn-241. The PSI 1 domain occupies 438-480 (TCAHHESCTDCQVSVDPLCQWCHPTQSCTTSSRCSGPLTTQCP). A glycan (N-linked (GlcNAc...) asparagine) is linked at Asn-494. An intrachain disulfide couples Cys-516 to Cys-538. N-linked (GlcNAc...) asparagine glycosylation occurs at Asn-566. The region spanning 571-608 (DCAGYSTCSTCMSSEFGCQWCSHKCSSSCGSASAKACV) is the PSI 2 domain. 2 N-linked (GlcNAc...) asparagine glycosylation sites follow: Asn-670 and Asn-693. Residues 698 to 739 (SCSNLAADCSSCLALSPSLSCGWCNRKCSHECHESKATAVCD) enclose the PSI 3 domain. 3 IPT/TIG domains span residues 741-829 (PKID…FSFV), 831-916 (VSIF…FEYR), and 919-1006 (PSVN…FLMD). 4 N-linked (GlcNAc...) asparagine glycosylation sites follow: Asn-855, Asn-877, Asn-975, and Asn-1007. A helical transmembrane segment spans residues 1131–1151 (FLILGLLLFTVITLIVMCLIF). Residues 1150-1188 (IFKRRRQEREKEYRKIQLQMENLENNVRKECKQAFAELQ) are a coiled coil. Topologically, residues 1152 to 1764 (KRRRQEREKE…LHVCLETDNH (613 aa)) are cytoplasmic.

Belongs to the plexin family. In terms of assembly, interacts with mab-20.

Its subcellular location is the cell membrane. Its function is as follows. Involved as a receptor for mab-20/sema-2a in the formation or stabilization of cell-cell contacts at several stages of epithelial morphogenesis. In early embryonic development, required for proper ventral closure of the epidermis. During male tail morphogenesis, involved in precursor cell sorting and in the formation of distinct sensory rays. Involved in axon guidance of SDQL neurons during neurogenesis. This is Plexin-2 (plx-2) from Caenorhabditis briggsae.